We begin with the raw amino-acid sequence, 495 residues long: DDB1- and CUL4-associated factor 4 (495 aa).

Basic residues predominate over residues Met1–His17. A disordered region spans residues Met1–Leu66. Residues Arg24–Ser34 are compositionally biased toward basic and acidic residues. The segment covering Pro51 to Ser62 has biased composition (low complexity). WD repeat units follow at residues Phe368–Gln407 and Gly410–Thr451.

In terms of assembly, interacts with DDB1 and CUL4A.

Its pathway is protein modification; protein ubiquitination. Functionally, may function as a substrate receptor for CUL4-DDB1 E3 ubiquitin-protein ligase complex. This chain is DDB1- and CUL4-associated factor 4 (DCAF4), found in Homo sapiens (Human).